Consider the following 79-residue polypeptide: MPKRIMQGVVVSDKMDKTIVVQVERRFKHAVYKKFIKRTKKFAAHDELNQFKIGDLVRIRECAPISRRKTWEVVLDNAE.

It belongs to the universal ribosomal protein uS17 family. As to quaternary structure, part of the 30S ribosomal subunit.

Functionally, one of the primary rRNA binding proteins, it binds specifically to the 5'-end of 16S ribosomal RNA. The sequence is that of Small ribosomal subunit protein uS17 from Rhodospirillum rubrum (strain ATCC 11170 / ATH 1.1.1 / DSM 467 / LMG 4362 / NCIMB 8255 / S1).